A 202-amino-acid polypeptide reads, in one-letter code: Large ribosomal subunit protein bL9 (202 aa).

Residues 176 to 202 (AAGEFFDPDAQHDDEPAAEDDQNAEEK) are disordered. Over residues 191-202 (PAAEDDQNAEEK) the composition is skewed to acidic residues.

Belongs to the bacterial ribosomal protein bL9 family.

In terms of biological role, binds to the 23S rRNA. The sequence is that of Large ribosomal subunit protein bL9 from Nitrobacter winogradskyi (strain ATCC 25391 / DSM 10237 / CIP 104748 / NCIMB 11846 / Nb-255).